Consider the following 155-residue polypeptide: Small ribosomal subunit protein uS7c (155 aa).

The protein belongs to the universal ribosomal protein uS7 family. In terms of assembly, part of the 30S ribosomal subunit.

The protein localises to the plastid. It localises to the chloroplast. One of the primary rRNA binding proteins, it binds directly to 16S rRNA where it nucleates assembly of the head domain of the 30S subunit. In Spathiphyllum wallisii (Peace lily), this protein is Small ribosomal subunit protein uS7c (rps7).